The sequence spans 340 residues: Putative esterase YheT (340 aa).

The AB hydrolase-1 domain occupies 73 to 312 (PRLVVFHGLE…TEHGGHVGFI (240 aa)). Catalysis depends on charge relay system residues S153, D280, and H308.

The protein belongs to the AB hydrolase superfamily. AB hydrolase 4 family.

The protein is Putative esterase YheT (yheT) of Escherichia coli (strain K12).